The chain runs to 205 residues: Orotate phosphoribosyltransferase (205 aa).

Residue 116–124 (EDIITTGGS) participates in 5-phospho-alpha-D-ribose 1-diphosphate binding. Orotate-binding residues include Thr120 and Arg148.

The protein belongs to the purine/pyrimidine phosphoribosyltransferase family. PyrE subfamily. Homodimer. The cofactor is Mg(2+).

It catalyses the reaction orotidine 5'-phosphate + diphosphate = orotate + 5-phospho-alpha-D-ribose 1-diphosphate. Its pathway is pyrimidine metabolism; UMP biosynthesis via de novo pathway; UMP from orotate: step 1/2. Its function is as follows. Catalyzes the transfer of a ribosyl phosphate group from 5-phosphoribose 1-diphosphate to orotate, leading to the formation of orotidine monophosphate (OMP). The protein is Orotate phosphoribosyltransferase of Wolinella succinogenes (strain ATCC 29543 / DSM 1740 / CCUG 13145 / JCM 31913 / LMG 7466 / NCTC 11488 / FDC 602W) (Vibrio succinogenes).